Reading from the N-terminus, the 447-residue chain is KICSTOR complex protein ITFG2 (447 aa).

An FG-GAP 1; atypical repeat occupies 19–48; that stretch reads FPHAICLGDVDNDTLNELVVGDTSGKVSVY. A Phosphoserine modification is found at S104. Residues 126 to 155 form an FG-GAP 2; atypical repeat; the sequence is NTKVMLISDIDGDGCRELVVGYTDRVVRAF. Position 220 is a phosphoserine (S220).

As to quaternary structure, part of the KICSTOR complex composed of KPTN, ITFG2, KICS2 and SZT2. SZT2 probably serves as a link between the other three proteins in the KICSTOR complex and may mediate the direct interaction with the GATOR complex via GATOR1. The KICSTOR complex interacts directly with the GATOR1 complex and most probably indirectly with the GATOR2 complex in an amino acid-independent manner.

It is found in the lysosome membrane. In terms of biological role, as part of the KICSTOR complex functions in the amino acid-sensing branch of the TORC1 signaling pathway. Recruits, in an amino acid-independent manner, the GATOR1 complex to the lysosomal membranes and allows its interaction with GATOR2 and the RAG GTPases. Functions upstream of the RAG GTPases and is required to negatively regulate mTORC1 signaling in absence of amino acids. In absence of the KICSTOR complex mTORC1 is constitutively localized to the lysosome and activated. The KICSTOR complex is also probably involved in the regulation of mTORC1 by glucose. The sequence is that of KICSTOR complex protein ITFG2 from Homo sapiens (Human).